Consider the following 705-residue polypeptide: MAPAVGIDLGTTYSCVGIFRDDRIEIIANDQGNRTTPSFVAFTDTERLIGDAAKNQVAMNPANTVFDAKRLIGRKFADPEVQADMKHFPFKITDKGGKPVIQVEFKGETKEFTPEEISSMVLTKMRETAEAYLGGTVNNAVVTVPAYFNDSQRQATKDAGLIAGLNVLRIINEPTAAAIAYGLDKKADGERNVLIFDLGGGTFDVSLLTIEEGIFEVKSTAGDTHLGGEDFDNRLVNHFVSEFKRKFKKISPAERARALRRSPTACERAKRTLSSAAQTSIEIDSLYEGIDFYTSITRARFEELCQDLFRSTMEPVERVLRDAKIDKSSVHEIVLVGGSTRIPRIQKLVSDFFNGKEPNKSINPDEAVAYGAAVQAAILSGDTSSKSTNEILLLDVAPLSLGIETAGGVMTPLIKRNTTIPTKKSETFSTFSDNQPGVLIQVFEGERARTKDNNLLGKFELTGIPRARGVPQIEVTFDVDANGIMNVSALEKGTRKTNKIVITNDKGRLSKEEIERMLAEAEKYKAEDEAEASRIRPKNGLESYAYSLRNSLRHSKVDEKLEAGDKEKLKSEIDKTVQWLDENQTATKEEYESQQKELEAVANPIMMKFYAGGEGAPGGFPGAGGPGGFPGGPGAGHASGGGDDGPTVEEVDLKFPMLPLPWQLSVRKMHRPFFLFLLFLIFLIFLILFLFYFFLPVRFNESCFS.

Gly residues predominate over residues 624–644; that stretch reads GGPGGFPGGPGAGHASGGGDD. The segment at 624–645 is disordered; that stretch reads GGPGGFPGGPGAGHASGGGDDG.

The protein belongs to the heat shock protein 70 family.

The chain is Heat shock 70 kDa protein (HSP70) from Ajellomyces capsulatus (Darling's disease fungus).